The primary structure comprises 169 residues: Translationally-controlled tumor protein homolog (169 aa).

Residues 1–169 (MLIYKDILTG…WKHGLEEMKV (169 aa)) form the TCTP domain.

The protein belongs to the TCTP family.

It is found in the cytoplasm. The protein localises to the cytoskeleton. Its function is as follows. Involved in protein synthesis. Involved in microtubule stabilization. The sequence is that of Translationally-controlled tumor protein homolog from Alternaria alternata (Alternaria rot fungus).